A 462-amino-acid chain; its full sequence is UDP-N-acetylmuramoylalanine--D-glutamate ligase (462 aa).

An ATP-binding site is contributed by 117–123 (GTNGKTT).

The protein belongs to the MurCDEF family.

Its subcellular location is the cytoplasm. It carries out the reaction UDP-N-acetyl-alpha-D-muramoyl-L-alanine + D-glutamate + ATP = UDP-N-acetyl-alpha-D-muramoyl-L-alanyl-D-glutamate + ADP + phosphate + H(+). The protein operates within cell wall biogenesis; peptidoglycan biosynthesis. Functionally, cell wall formation. Catalyzes the addition of glutamate to the nucleotide precursor UDP-N-acetylmuramoyl-L-alanine (UMA). This is UDP-N-acetylmuramoylalanine--D-glutamate ligase from Parasynechococcus marenigrum (strain WH8102).